We begin with the raw amino-acid sequence, 486 residues long: Cardiolipin synthase A (486 aa).

2 helical membrane passes run 3–23 (TFYT…IAGV) and 38–58 (MAWL…YLSV). PLD phosphodiesterase domains lie at 219-246 (MDLR…VDPR) and 399-426 (EGGL…DMRS). Active-site residues include H224, K226, D231, H404, K406, and D411.

The protein belongs to the phospholipase D family. Cardiolipin synthase subfamily. ClsA sub-subfamily.

It localises to the cell inner membrane. The catalysed reaction is 2 a 1,2-diacyl-sn-glycero-3-phospho-(1'-sn-glycerol) = a cardiolipin + glycerol. Catalyzes the reversible phosphatidyl group transfer from one phosphatidylglycerol molecule to another to form cardiolipin (CL) (diphosphatidylglycerol) and glycerol. The protein is Cardiolipin synthase A of Cronobacter sakazakii (strain ATCC BAA-894) (Enterobacter sakazakii).